Here is a 285-residue protein sequence, read N- to C-terminus: Pantothenate synthetase (285 aa).

33 to 40 (MGALHEGH) serves as a coordination point for ATP. The active-site Proton donor is the H40. Q64 lines the (R)-pantoate pocket. Q64 contacts beta-alanine. 150–153 (GEKD) lines the ATP pocket. (R)-pantoate is bound at residue Q156. ATP is bound by residues A179 and 187–190 (LSSR).

The protein belongs to the pantothenate synthetase family. Homodimer.

The protein resides in the cytoplasm. The enzyme catalyses (R)-pantoate + beta-alanine + ATP = (R)-pantothenate + AMP + diphosphate + H(+). It functions in the pathway cofactor biosynthesis; (R)-pantothenate biosynthesis; (R)-pantothenate from (R)-pantoate and beta-alanine: step 1/1. Its function is as follows. Catalyzes the condensation of pantoate with beta-alanine in an ATP-dependent reaction via a pantoyl-adenylate intermediate. The polypeptide is Pantothenate synthetase (Caulobacter vibrioides (strain ATCC 19089 / CIP 103742 / CB 15) (Caulobacter crescentus)).